The sequence spans 302 residues: MDKDKVLLVLHGKQAGNEEVRAAVAAQREAGRELAVRVTWEDGDARRIVEEALAAGYATLVAGGGDGTLREVAEALARGRGEASLAILPLGTANDFARAAGIPLEPAAALALLDQTARPIDLGEVNGKLFLNMATGGFGSKVTANTSEDLKKVLGGAAYLLTGLTRFSEVHAAQGRFSAPDFQWEGEFLALGIGNGRQAGGGHVLCPQARVDDGLLDVSILPTPQDMVGTLGTLLGGGNGVESLFVRARVPWLEVEAAEGLDVNLDGEPLEGRKLRFSVSPGALRVHLPAGSPLLREPPRED.

A DAGKc domain is found at 1 to 129 (MDKDKVLLVL…IDLGEVNGKL (129 aa)). Residues threonine 39, 65 to 71 (GDGTLRE), and threonine 92 contribute to the ATP site. Mg(2+)-binding residues include arginine 210, aspartate 213, and leucine 215. Glutamate 268 functions as the Proton acceptor in the catalytic mechanism.

This sequence belongs to the diacylglycerol/lipid kinase family. YegS lipid kinase subfamily. Mg(2+) is required as a cofactor. Ca(2+) serves as cofactor.

It is found in the cytoplasm. Its function is as follows. Probably phosphorylates lipids; the in vivo substrate is unknown. The protein is Probable lipid kinase YegS-like of Pseudomonas aeruginosa (strain ATCC 15692 / DSM 22644 / CIP 104116 / JCM 14847 / LMG 12228 / 1C / PRS 101 / PAO1).